A 542-amino-acid polypeptide reads, in one-letter code: Cytochrome P450 monooxygenase TRI1 (542 aa).

Residues leucine 37–leucine 54 form a helical membrane-spanning segment. 3 N-linked (GlcNAc...) asparagine glycosylation sites follow: asparagine 167, asparagine 297, and asparagine 428. A heme-binding site is contributed by cysteine 469.

The protein belongs to the cytochrome P450 family. It depends on heme as a cofactor.

Its subcellular location is the membrane. Its pathway is sesquiterpene biosynthesis; trichothecene biosynthesis. Its function is as follows. Cytochrome P450 monooxygenase; part of 2-gene cluster involved in trichothecene C-8 modification that mediates the biosynthesis of T2-toxin. The biosynthesis of trichothecenes begins with the cyclization of farnesyl diphosphate to trichodiene and is catalyzed by the trichodiene synthase TRI5. Trichodiene undergoes a series of oxygenations catalyzed by the cytochrome P450 monooxygenase TRI4. TRI4 controls the addition of four oxygens at C-2, C-3, C-11, and the C-12, C-13-epoxide to form the intermediate isotrichotriol. Isotrichotriol then undergoes a non-enzymatic isomerization and cyclization to form isotrichodermol. During this process, the oxygen at the C-2 position becomes the pyran ring oxygen and the hydroxyl group at C-11 is lost. More complex type A trichothecenes are built by modifying isotrichodermol through a series of paired hydroxylation and acetylation or acylation steps. Isotrichodermol is converted to isotrichodermin by the acetyltransferase TRI101. TRI101 encodes a C-3 transacetylase that acts as a self-protection or resistance factor during biosynthesis and that the presence of a free C-3 hydroxyl group is a key component of Fusarium trichothecene phytotoxicity. A second hydroxyl group is added to C-15 by the trichothecene C-15 hydroxylase TRI11, producing 15-decalonectrin, which is then acetylated by TRI3, producing calonectrin. A third hydroxyl group is added at C-4 by the cytochrome P450 monooxygenase TRI13, converting calonectrin to 3,15-diacetoxyspirpenol, which is subsequently acetylated by the acetyltransferase TRI7. A fourth hydroxyl group is added to C-8 by the cytochrome P450 monooxygenase TRI1, followed by the addition of an isovaleryl moiety by TRI16. Finally, the acetyl group is removed from the C-3 position by the trichothecene C-3 esterase TRI8 to produce T-2 toxin. In Fusarium sporotrichioides, this protein is Cytochrome P450 monooxygenase TRI1.